A 317-amino-acid chain; its full sequence is Cytochrome f (317 aa).

The N-terminal stretch at 1–31 is a signal peptide; sequence MIFKPQSFLKAIVLSMTITFAFNMSAPIASA. Tyr-32, Cys-52, Cys-55, and His-56 together coordinate heme. A helical membrane pass occupies residues 280 to 302; sequence PVRIQGLLAFFACILLAQILLVV.

It belongs to the cytochrome f family. As to quaternary structure, the 4 large subunits of the cytochrome b6-f complex are cytochrome b6, subunit IV (17 kDa polypeptide, petD), cytochrome f and the Rieske protein, while the 4 small subunits are PetG, PetL, PetM and PetN. The complex functions as a dimer. The cofactor is heme.

Its subcellular location is the plastid. It localises to the chloroplast thylakoid membrane. In terms of biological role, component of the cytochrome b6-f complex, which mediates electron transfer between photosystem II (PSII) and photosystem I (PSI), cyclic electron flow around PSI, and state transitions. This Chlamydomonas subcaudata protein is Cytochrome f.